Here is a 236-residue protein sequence, read N- to C-terminus: MTRRYWNINLEEMMEAGVHFGHGTRKWNPRMSPYISAKCKGIHIINLTRTARFLSEACDLVFDASSRGKQFLIVGTKNKAADSVARAAIRARCHYVNKKWLGGMLTNWSTTETRLHKFRDLRMEQTAGRLARLPKRDAAVVKRQLSHLQTYLGGIKYMTGLPDIVIIVDQQEEYTALRECITLGIPTICLIDTNCNPDLADISIPANDDAIASIRLILTKLVFAICEGRSSYIRNP.

In terms of assembly, component of the chloroplast small ribosomal subunit (SSU). Mature 70S chloroplast ribosomes of higher plants consist of a small (30S) and a large (50S) subunit. The 30S small subunit contains 1 molecule of ribosomal RNA (16S rRNA) and 24 different proteins. The 50S large subunit contains 3 rRNA molecules (23S, 5S and 4.5S rRNA) and 33 different proteins.

It is found in the plastid. The protein resides in the chloroplast. Its function is as follows. Component of the chloroplast ribosome (chloro-ribosome), a dedicated translation machinery responsible for the synthesis of chloroplast genome-encoded proteins, including proteins of the transcription and translation machinery and components of the photosynthetic apparatus. This chain is Small ribosomal subunit protein uS2c (rps2), found in Spinacia oleracea (Spinach).